Reading from the N-terminus, the 214-residue chain is Holliday junction branch migration complex subunit RuvA (214 aa).

Residues 1–63 are domain I; it reads MISFLRGPVA…EDSMTLYGFA (63 aa). The segment at 64-139 is domain II; sequence DPDEREVFEI…KLVPHGTVNG (76 aa). A flexible linker region spans residues 139–143; sequence GAPAS. The tract at residues 144-214 is domain III; the sequence is PSAQWKPQVV…SAGRQVTARG (71 aa).

It belongs to the RuvA family. As to quaternary structure, homotetramer. Forms an RuvA(8)-RuvB(12)-Holliday junction (HJ) complex. HJ DNA is sandwiched between 2 RuvA tetramers; dsDNA enters through RuvA and exits via RuvB. An RuvB hexamer assembles on each DNA strand where it exits the tetramer. Each RuvB hexamer is contacted by two RuvA subunits (via domain III) on 2 adjacent RuvB subunits; this complex drives branch migration. In the full resolvosome a probable DNA-RuvA(4)-RuvB(12)-RuvC(2) complex forms which resolves the HJ.

It is found in the cytoplasm. Its function is as follows. The RuvA-RuvB-RuvC complex processes Holliday junction (HJ) DNA during genetic recombination and DNA repair, while the RuvA-RuvB complex plays an important role in the rescue of blocked DNA replication forks via replication fork reversal (RFR). RuvA specifically binds to HJ cruciform DNA, conferring on it an open structure. The RuvB hexamer acts as an ATP-dependent pump, pulling dsDNA into and through the RuvAB complex. HJ branch migration allows RuvC to scan DNA until it finds its consensus sequence, where it cleaves and resolves the cruciform DNA. The chain is Holliday junction branch migration complex subunit RuvA from Renibacterium salmoninarum (strain ATCC 33209 / DSM 20767 / JCM 11484 / NBRC 15589 / NCIMB 2235).